The sequence spans 120 residues: Basic phospholipase A2 homolog LmutTX (120 aa).

Disulfide bonds link Cys-26–Cys-114, Cys-28–Cys-44, Cys-43–Cys-95, Cys-49–Cys-120, Cys-50–Cys-88, Cys-57–Cys-81, and Cys-75–Cys-86.

It belongs to the phospholipase A2 family. Group II subfamily. K49 sub-subfamily. As to quaternary structure, monomer. In terms of tissue distribution, expressed by the venom gland.

It is found in the secreted. Functionally, snake venom phospholipase A2 homolog that lacks enzymatic activity. Shows moderate cytotoxicity against C2C12 myotubes (activity above 200 ug/mL). Also shows antibacterial activity against both Gram-positive and Gram-negative bacteria. A model of myotoxic mechanism has been proposed: an apo Lys49-PLA2 is activated by the entrance of a hydrophobic molecule (e.g. fatty acid) at the hydrophobic channel of the protein leading to a reorientation of a monomer. This reorientation causes a transition between 'inactive' to 'active' states, causing alignment of C-terminal and membrane-docking sites (MDoS) side-by-side and putting the membrane-disruption sites (MDiS) in the same plane, exposed to solvent and in a symmetric position for both monomers. The MDoS region stabilizes the toxin on membrane by the interaction of charged residues with phospholipid head groups. Subsequently, the MDiS region destabilizes the membrane with penetration of hydrophobic residues. This insertion causes a disorganization of the membrane, allowing an uncontrolled influx of ions (i.e. calcium and sodium), and eventually triggering irreversible intracellular alterations and cell death. This chain is Basic phospholipase A2 homolog LmutTX, found in Lachesis muta muta (Bushmaster).